The following is a 348-amino-acid chain: Protein RecA (348 aa).

64-71 provides a ligand contact to ATP; the sequence is GPESSGKT. The segment covering 325 to 335 has biased composition (basic and acidic residues); that stretch reads YEIDGSSKEPL. A disordered region spans residues 325–348; that stretch reads YEIDGSSKEPLDEKEETLSLLDDE.

This sequence belongs to the RecA family.

It is found in the cytoplasm. Can catalyze the hydrolysis of ATP in the presence of single-stranded DNA, the ATP-dependent uptake of single-stranded DNA by duplex DNA, and the ATP-dependent hybridization of homologous single-stranded DNAs. It interacts with LexA causing its activation and leading to its autocatalytic cleavage. The protein is Protein RecA of Listeria monocytogenes serotype 1/2a (strain 10403S).